The sequence spans 547 residues: Kelch repeat and BTB domain-containing protein 2 (547 aa).

The BTB domain maps to 20–89; it reads CDVIITIGDG…LYNRHISSMN (70 aa). Kelch repeat units lie at residues 295–342, 343–389, and 391–454; these read DIII…VIDD, TIYA…VLDQ, and IYII…SHKD.

Interacts (via BTB domain) with host CUL3.

The protein localises to the host cytoplasm. Probable substrate-specific adapter of CUL3-containing E3 ubiquitin-protein ligases which mediate the ubiquitination and subsequent proteasomal degradation of host target proteins. This chain is Kelch repeat and BTB domain-containing protein 2 (KBTB2), found in Bos taurus (Bovine).